Reading from the N-terminus, the 153-residue chain is ATP synthase subunit b' (153 aa).

The helical transmembrane segment at leucine 23–phenylalanine 40 threads the bilayer.

This sequence belongs to the ATPase B chain family. In terms of assembly, F-type ATPases have 2 components, F(1) - the catalytic core - and F(0) - the membrane proton channel. F(1) has five subunits: alpha(3), beta(3), gamma(1), delta(1), epsilon(1). F(0) has four main subunits: a(1), b(1), b'(1) and c(10-14). The alpha and beta chains form an alternating ring which encloses part of the gamma chain. F(1) is attached to F(0) by a central stalk formed by the gamma and epsilon chains, while a peripheral stalk is formed by the delta, b and b' chains.

The protein resides in the cellular thylakoid membrane. In terms of biological role, f(1)F(0) ATP synthase produces ATP from ADP in the presence of a proton or sodium gradient. F-type ATPases consist of two structural domains, F(1) containing the extramembraneous catalytic core and F(0) containing the membrane proton channel, linked together by a central stalk and a peripheral stalk. During catalysis, ATP synthesis in the catalytic domain of F(1) is coupled via a rotary mechanism of the central stalk subunits to proton translocation. Component of the F(0) channel, it forms part of the peripheral stalk, linking F(1) to F(0). The b'-subunit is a diverged and duplicated form of b found in plants and photosynthetic bacteria. This Prochlorococcus marinus (strain MIT 9215) protein is ATP synthase subunit b'.